Here is a 476-residue protein sequence, read N- to C-terminus: Eukaryotic translation initiation factor 3 subunit L (476 aa).

The PCI domain occupies 257–452; that stretch reads DAIRMFSHIL…DLDYALEKDL (196 aa).

This sequence belongs to the eIF-3 subunit L family. Component of the eukaryotic translation initiation factor 3 (eIF-3) complex.

It is found in the cytoplasm. Functionally, component of the eukaryotic translation initiation factor 3 (eIF-3) complex, which is involved in protein synthesis of a specialized repertoire of mRNAs and, together with other initiation factors, stimulates binding of mRNA and methionyl-tRNAi to the 40S ribosome. The eIF-3 complex specifically targets and initiates translation of a subset of mRNAs involved in cell proliferation. The chain is Eukaryotic translation initiation factor 3 subunit L from Emericella nidulans (strain FGSC A4 / ATCC 38163 / CBS 112.46 / NRRL 194 / M139) (Aspergillus nidulans).